Reading from the N-terminus, the 131-residue chain is uncharacterized protein (131 aa).

This is an uncharacterized protein from Methanocaldococcus jannaschii (strain ATCC 43067 / DSM 2661 / JAL-1 / JCM 10045 / NBRC 100440) (Methanococcus jannaschii).